A 306-amino-acid polypeptide reads, in one-letter code: Curved DNA-binding protein (306 aa).

Positions 5 to 69 constitute a J domain; it reads DYYAIMGVKP…QRRAEYDQMW (65 aa).

It localises to the cytoplasm. The protein localises to the nucleoid. In terms of biological role, DNA-binding protein that preferentially recognizes a curved DNA sequence. It is probably a functional analog of DnaJ; displays overlapping activities with DnaJ, but functions under different conditions, probably acting as a molecular chaperone in an adaptive response to environmental stresses other than heat shock. Lacks autonomous chaperone activity; binds native substrates and targets them for recognition by DnaK. Its activity is inhibited by the binding of CbpM. The chain is Curved DNA-binding protein from Escherichia coli (strain K12 / MC4100 / BW2952).